The following is a 132-amino-acid chain: Histone H2A-alpha (132 aa).

An N-acetylserine modification is found at S2. K5 and K9 each carry N6-acetyllysine. Q106 carries the N5-methylglutamine modification. S129 carries the phosphoserine modification. Residues 129–130 (SQ) carry the [ST]-Q motif motif.

It belongs to the histone H2A family. As to quaternary structure, the nucleosome is a histone octamer containing two molecules each of H2A, H2B, H3 and H4 assembled in one H3-H4 heterotetramer and two H2A-H2B heterodimers. The octamer wraps approximately 147 bp of DNA. Interacts with mdb1 (via BRCT domain) in vitro; this interaction requires phosphorylation of this protein at the S/T-Q motif. In terms of processing, phosphorylated to form H2AS128ph (gamma-H2A) in response to DNA double-strand breaks (DSBs) generated by exogenous genotoxic agents and by stalled replication forks. Phosphorylation is dependent on the DNA damage checkpoint kinases rad3/ATR and tel1/ATM, spreads on either side of a detected DSB site and may mark the surrounding chromatin for recruitment of proteins required for DNA damage signaling and repair. Gamma-H2A is required for recruiting crb2, a modulator of DNA damage checkpoint signaling, to DSB sites. Gamma-H2A is removed from the DNA prior to the strand invasion-primer extension step of the repair process and subsequently dephosphorylated. Dephosphorylation is necessary for efficient recovery from the DNA damage checkpoint. Post-translationally, acetylated by esa1 to form H2AK4ac and H2AK7ac.

Its subcellular location is the nucleus. The protein resides in the chromosome. Functionally, core component of nucleosome which plays a central role in DNA double strand break (DSB) repair. Nucleosomes wrap and compact DNA into chromatin, limiting DNA accessibility to the cellular machineries which require DNA as a template. Histones thereby play a central role in transcription regulation, DNA repair, DNA replication and chromosomal stability. DNA accessibility is regulated via a complex set of post-translational modifications of histones, also called histone code, and nucleosome remodeling. This Schizosaccharomyces pombe (strain 972 / ATCC 24843) (Fission yeast) protein is Histone H2A-alpha (hta1).